Reading from the N-terminus, the 298-residue chain is Acetylglutamate kinase (298 aa).

Residues 67 to 68 (GG), Arg89, and Asn193 each bind substrate.

Belongs to the acetylglutamate kinase family. ArgB subfamily.

The protein localises to the cytoplasm. It carries out the reaction N-acetyl-L-glutamate + ATP = N-acetyl-L-glutamyl 5-phosphate + ADP. Its pathway is amino-acid biosynthesis; L-arginine biosynthesis; N(2)-acetyl-L-ornithine from L-glutamate: step 2/4. Functionally, catalyzes the ATP-dependent phosphorylation of N-acetyl-L-glutamate. This Desulfitobacterium hafniense (strain DSM 10664 / DCB-2) protein is Acetylglutamate kinase.